A 351-amino-acid polypeptide reads, in one-letter code: tRNA-specific 2-thiouridylase MnmA (351 aa).

ATP contacts are provided by residues Gly7–Ser14 and Leu33. The Nucleophile role is filled by Cys94. A disulfide bridge connects residues Cys94 and Cys193. An ATP-binding site is contributed by Gly119. The segment at Lys143–Gln145 is interaction with tRNA. The Cysteine persulfide intermediate role is filled by Cys193. The interval Arg298–Tyr299 is interaction with tRNA.

This sequence belongs to the MnmA/TRMU family.

It is found in the cytoplasm. It carries out the reaction S-sulfanyl-L-cysteinyl-[protein] + uridine(34) in tRNA + AH2 + ATP = 2-thiouridine(34) in tRNA + L-cysteinyl-[protein] + A + AMP + diphosphate + H(+). Functionally, catalyzes the 2-thiolation of uridine at the wobble position (U34) of tRNA, leading to the formation of s(2)U34. In Nostoc punctiforme (strain ATCC 29133 / PCC 73102), this protein is tRNA-specific 2-thiouridylase MnmA.